A 339-amino-acid chain; its full sequence is Ribosomal RNA small subunit methyltransferase C (339 aa).

Belongs to the methyltransferase superfamily. RsmC family. In terms of assembly, monomer.

It is found in the cytoplasm. It carries out the reaction guanosine(1207) in 16S rRNA + S-adenosyl-L-methionine = N(2)-methylguanosine(1207) in 16S rRNA + S-adenosyl-L-homocysteine + H(+). Specifically methylates the guanine in position 1207 of 16S rRNA in the 30S particle. The sequence is that of Ribosomal RNA small subunit methyltransferase C from Aliivibrio salmonicida (strain LFI1238) (Vibrio salmonicida (strain LFI1238)).